Reading from the N-terminus, the 1110-residue chain is Ribosome assembly protein 1 (1110 aa).

The 246-residue stretch at 17 to 262 folds into the tr-type G domain; the sequence is SCIRNICIVA…QKLGAKRENL (246 aa). GTP contacts are provided by residues 26-33, 102-106, and 156-159; these read AHVDHGKT, DSPGH, and NKID. S431 carries the post-translational modification Phosphoserine.

It belongs to the TRAFAC class translation factor GTPase superfamily. Classic translation factor GTPase family.

It localises to the cytoplasm. The enzyme catalyses GTP + H2O = GDP + phosphate + H(+). Its activity is regulated as follows. GTPase activity is stimulated in the presence of 60S subunits. In terms of biological role, GTPase involved in the biogenesis of the 60S ribosomal subunit and translational activation of ribosomes. Together with SDO1, may trigger the GTP-dependent release of TIF6 from 60S pre-ribosomes in the cytoplasm, thereby activating ribosomes for translation competence by allowing 80S ribosome assembly and facilitating TIF6 recycling to the nucleus, where it is required for 60S rRNA processing and nuclear export. Inhibits GTPase activity of ribosome-bound EF-2. This Saccharomyces cerevisiae (strain ATCC 204508 / S288c) (Baker's yeast) protein is Ribosome assembly protein 1 (RIA1).